We begin with the raw amino-acid sequence, 568 residues long: Putative ABC transporter ATP-binding protein CPE1583 (568 aa).

ABC transporter domains are found at residues 7 to 248 (IEFK…GIRE) and 303 to 536 (LEFK…ASLK). Residues 41–48 (GPSGSGKS) and 336–343 (GKNGAGKS) contribute to the ATP site.

Belongs to the ABC transporter superfamily.

The protein resides in the cell membrane. In terms of biological role, probably part of an ABC transporter complex. Responsible for energy coupling to the transport system. In Clostridium perfringens (strain 13 / Type A), this protein is Putative ABC transporter ATP-binding protein CPE1583.